Consider the following 155-residue polypeptide: Alanine- and arginine-rich domain-containing protein (155 aa).

The sequence is that of Alanine- and arginine-rich domain-containing protein (AARD) from Homo sapiens (Human).